The primary structure comprises 299 residues: tRNA-cytidine(32) 2-sulfurtransferase (299 aa).

Positions 56–61 match the PP-loop motif motif; the sequence is SGGKDS. Residues Cys-131, Cys-134, and Cys-222 each coordinate [4Fe-4S] cluster.

It belongs to the TtcA family. As to quaternary structure, homodimer. Mg(2+) serves as cofactor. [4Fe-4S] cluster is required as a cofactor.

It localises to the cytoplasm. It catalyses the reaction cytidine(32) in tRNA + S-sulfanyl-L-cysteinyl-[cysteine desulfurase] + AH2 + ATP = 2-thiocytidine(32) in tRNA + L-cysteinyl-[cysteine desulfurase] + A + AMP + diphosphate + H(+). The protein operates within tRNA modification. In terms of biological role, catalyzes the ATP-dependent 2-thiolation of cytidine in position 32 of tRNA, to form 2-thiocytidine (s(2)C32). The sulfur atoms are provided by the cysteine/cysteine desulfurase (IscS) system. This Xylella fastidiosa (strain M23) protein is tRNA-cytidine(32) 2-sulfurtransferase.